The primary structure comprises 375 residues: Anhydro-N-acetylmuramic acid kinase (375 aa).

14 to 21 is a binding site for ATP; the sequence is GTSMDGAD.

This sequence belongs to the anhydro-N-acetylmuramic acid kinase family.

The enzyme catalyses 1,6-anhydro-N-acetyl-beta-muramate + ATP + H2O = N-acetyl-D-muramate 6-phosphate + ADP + H(+). It functions in the pathway amino-sugar metabolism; 1,6-anhydro-N-acetylmuramate degradation. Its pathway is cell wall biogenesis; peptidoglycan recycling. Functionally, catalyzes the specific phosphorylation of 1,6-anhydro-N-acetylmuramic acid (anhMurNAc) with the simultaneous cleavage of the 1,6-anhydro ring, generating MurNAc-6-P. Is required for the utilization of anhMurNAc either imported from the medium or derived from its own cell wall murein, and thus plays a role in cell wall recycling. The sequence is that of Anhydro-N-acetylmuramic acid kinase from Cupriavidus pinatubonensis (strain JMP 134 / LMG 1197) (Cupriavidus necator (strain JMP 134)).